The primary structure comprises 1296 residues: Phosphoribosylformylglycinamidine synthase (1296 aa).

A disordered region spans residues 300–325 (APFSGAATGSGGEIRDEGATGRGSKP). ATP contacts are provided by residues 304–315 (GAATGSGGEIRD) and Ala-675. Residues Glu-715, Asn-719, and Asp-885 each contribute to the Mg(2+) site. Ser-887 serves as a coordination point for ATP. One can recognise a Glutamine amidotransferase type-1 domain in the interval 1043-1296 (MAILREQGVN…MFRNARKNVG (254 aa)). Catalysis depends on Cys-1136, which acts as the Nucleophile. Residues 1232–1253 (TQYPANPNGSPEGITGITSTDG) are disordered. Catalysis depends on residues His-1261 and Glu-1263.

This sequence in the N-terminal section; belongs to the FGAMS family. Monomer.

The protein localises to the cytoplasm. The enzyme catalyses N(2)-formyl-N(1)-(5-phospho-beta-D-ribosyl)glycinamide + L-glutamine + ATP + H2O = 2-formamido-N(1)-(5-O-phospho-beta-D-ribosyl)acetamidine + L-glutamate + ADP + phosphate + H(+). The protein operates within purine metabolism; IMP biosynthesis via de novo pathway; 5-amino-1-(5-phospho-D-ribosyl)imidazole from N(2)-formyl-N(1)-(5-phospho-D-ribosyl)glycinamide: step 1/2. In terms of biological role, phosphoribosylformylglycinamidine synthase involved in the purines biosynthetic pathway. Catalyzes the ATP-dependent conversion of formylglycinamide ribonucleotide (FGAR) and glutamine to yield formylglycinamidine ribonucleotide (FGAM) and glutamate. This is Phosphoribosylformylglycinamidine synthase from Pseudoalteromonas translucida (strain TAC 125).